We begin with the raw amino-acid sequence, 149 residues long: Prefoldin subunit alpha (149 aa).

Belongs to the prefoldin alpha subunit family. As to quaternary structure, heterohexamer of two alpha and four beta subunits.

The protein resides in the cytoplasm. Functionally, molecular chaperone capable of stabilizing a range of proteins. Seems to fulfill an ATP-independent, HSP70-like function in archaeal de novo protein folding. The chain is Prefoldin subunit alpha from Methanoculleus marisnigri (strain ATCC 35101 / DSM 1498 / JR1).